Consider the following 392-residue polypeptide: Phosphopentomutase (392 aa).

Residues Asp15, Asp287, His292, Asp328, His329, and His340 each coordinate Mn(2+).

Belongs to the phosphopentomutase family. The cofactor is Mn(2+).

The protein localises to the cytoplasm. It carries out the reaction 2-deoxy-alpha-D-ribose 1-phosphate = 2-deoxy-D-ribose 5-phosphate. It catalyses the reaction alpha-D-ribose 1-phosphate = D-ribose 5-phosphate. It participates in carbohydrate degradation; 2-deoxy-D-ribose 1-phosphate degradation; D-glyceraldehyde 3-phosphate and acetaldehyde from 2-deoxy-alpha-D-ribose 1-phosphate: step 1/2. In terms of biological role, isomerase that catalyzes the conversion of deoxy-ribose 1-phosphate (dRib-1-P) and ribose 1-phosphate (Rib-1-P) to deoxy-ribose 5-phosphate (dRib-5-P) and ribose 5-phosphate (Rib-5-P), respectively. This chain is Phosphopentomutase, found in Syntrophotalea carbinolica (strain DSM 2380 / NBRC 103641 / GraBd1) (Pelobacter carbinolicus).